The chain runs to 741 residues: MAKQTFEMTFEGRPLVVEVGQVAKQANGAVVVRYGDTTVLSVAVMSKKMATANFFPLQVNYEEKMYAAGKFPGGFSKREGRPSTDATLTARLIDRPIRPMFAEGFRNEVQVINTVLSYDENASAPMAAMFGSSLALSISDIPFNGPIAGVQVAYAAEDFIINPSASDKEVSHLDLIVAGTKEAINMVEAGAQELSEDIMLQALLKGHEAIQELVDFQNYIVAAVGKEKAEVELFQVDADLKAEIEAVYYDQLAKAVQVEEKLAREAATKAVKEEVLASYQERFAEDEDKETILRDVVEILEQMEHAEVRRLITEDKIRPDGRRVDEIRPLDAEIDFLPNVHGSGLFTRGQTQALSVLTLAPMSDTQLVDGLDPEYKKRFLHHYNFPQYSVGETGRYGAPGRREIGHGALGERALAQVLPSVEEFPYAIRLVAEVLESNGSSSQASICAGTLALMAGGVPIKAPVAGIAMGLISDGTNYTVLTDIQGLEDHFGDMDFKVAGTRLGITALQMDIKISGITPAILEEALAQAKVARFEILDVIESAIAEPRSELAPTAPKIDSIQIPVDKIKVVIGKGGETIDKIIAETGVTIDIDEEGLVQIFSSDQDAIDRAKTIISDLVREAKVGEVYTVPVVRIEKFGAFVHLFNKTDALVHISELAWKHTEHVEDVVKVGDMVTVKIIKIDEKGRVDASIKTLLPKPEKNEDGENGEEHRHCCCSHHKPDHHNESVEAPKKSDESETKE.

Residues Asp-489 and Asp-495 each contribute to the Mg(2+) site. Positions 556–615 constitute a KH domain; that stretch reads PKIDSIQIPVDKIKVVIGKGGETIDKIIAETGVTIDIDEEGLVQIFSSDQDAIDRAKTII. Residues 625-693 enclose the S1 motif domain; the sequence is GEVYTVPVVR…EKGRVDASIK (69 aa). The segment at 695–741 is disordered; it reads LLPKPEKNEDGENGEEHRHCCCSHHKPDHHNESVEAPKKSDESETKE. Composition is skewed to basic and acidic residues over residues 698-713 and 723-741; these read KPEK…EHRH and HHNE…ETKE.

This sequence belongs to the polyribonucleotide nucleotidyltransferase family. Requires Mg(2+) as cofactor.

It localises to the cytoplasm. The catalysed reaction is RNA(n+1) + phosphate = RNA(n) + a ribonucleoside 5'-diphosphate. In terms of biological role, involved in mRNA degradation. Catalyzes the phosphorolysis of single-stranded polyribonucleotides processively in the 3'- to 5'-direction. This chain is Polyribonucleotide nucleotidyltransferase, found in Streptococcus thermophilus (strain CNRZ 1066).